We begin with the raw amino-acid sequence, 85 residues long: MDQLNNREQQEFQQLVEQKQMKDFMRLYSSLVQRCFTDCVNDFTSKALSSREESCLEKCSEKFLKHSERVGQRFQEQNAALMQKR.

The short motif at 35-59 (CFTDCVNDFTSKALSSREESCLEKC) is the Twin CX3C motif element. 2 cysteine pairs are disulfide-bonded: C35–C59 and C39–C55.

This sequence belongs to the small Tim family. In terms of assembly, heterohexamer; composed of 3 copies of TIM9 and 3 copies of TIM10, named soluble 70 kDa complex. Associates with the TIM22 complex, whose core is composed of TIM22 and TIM54. Interacts with the transmembrane regions of multi-pass transmembrane proteins in transit.

The protein localises to the mitochondrion inner membrane. In terms of biological role, mitochondrial intermembrane chaperone that participates in the import and insertion of multi-pass transmembrane proteins into the mitochondrial inner membrane. Also required for the transfer of beta-barrel precursors from the TOM complex to the sorting and assembly machinery (SAM complex) of the outer membrane. Acts as a chaperone-like protein that protects the hydrophobic precursors from aggregation and guide them through the mitochondrial intermembrane space. In Yarrowia lipolytica (strain CLIB 122 / E 150) (Yeast), this protein is Mitochondrial import inner membrane translocase subunit TIM9 (TIM9).